The sequence spans 178 residues: Deoxycytidylate deaminase (178 aa).

A CMP/dCMP-type deaminase domain is found at glutamate 14–aspartate 146. A Zn(2+)-binding site is contributed by histidine 84. Glutamate 86 serves as the catalytic Proton donor. Positions 110 and 113 each coordinate Zn(2+). Serine 174 carries the post-translational modification Phosphoserine.

Belongs to the cytidine and deoxycytidylate deaminase family. As to quaternary structure, homohexamer. Requires Zn(2+) as cofactor.

It carries out the reaction dCMP + H2O + H(+) = dUMP + NH4(+). It catalyses the reaction 5-hydroxymethyl-dCMP + H2O + H(+) = 5-hydroxymethyl-dUMP + NH4(+). With respect to regulation, allosteric enzyme whose activity is greatly influenced by the end products of its metabolic pathway, dCTP and dTTP. Its function is as follows. Catalyzes the deamination of dCMP to dUMP, providing the nucleoside monophosphate substrate for the thymidylate synthase/TYMS. Also, part of a nucleotide salvage pathway that eliminates epigenetically modified 5-hydroxymethyl-dCMP (hmdCMP) in a two-step process entailing deamination to cytotoxic 5-hydroxymethyl-dUMP (hmdUMP), followed by its hydrolysis into 5-hydroxymethyluracil (hmU) and 2-deoxy-D-ribose 5-phosphate (deoxyribosephosphate). Catalyzes the first step in that pathway, the deamination of 5-hydroxymethyl-dCMP (hmdCMP). This is Deoxycytidylate deaminase from Pongo abelii (Sumatran orangutan).